A 485-amino-acid polypeptide reads, in one-letter code: Adenosylhomocysteinase (485 aa).

The substrate site is built by Thr60, Asp146, and Glu208. 209–211 (TTT) provides a ligand contact to NAD(+). 2 residues coordinate substrate: Lys238 and Asp242. NAD(+)-binding positions include Asn243, 272 to 277 (GYGDVG), Glu295, Asn330, 351 to 353 (IGH), and Asn399.

Belongs to the adenosylhomocysteinase family. Requires NAD(+) as cofactor.

It is found in the cytoplasm. It carries out the reaction S-adenosyl-L-homocysteine + H2O = L-homocysteine + adenosine. It participates in amino-acid biosynthesis; L-homocysteine biosynthesis; L-homocysteine from S-adenosyl-L-homocysteine: step 1/1. May play a key role in the regulation of the intracellular concentration of adenosylhomocysteine. In Streptomyces griseus subsp. griseus (strain JCM 4626 / CBS 651.72 / NBRC 13350 / KCC S-0626 / ISP 5235), this protein is Adenosylhomocysteinase.